The primary structure comprises 243 residues: Probable transcriptional regulatory protein LJ_0904 (243 aa).

Residues 1–22 (MSGHSKWHNIQGRKNAQDAKRG) are disordered.

Belongs to the TACO1 family.

Its subcellular location is the cytoplasm. The chain is Probable transcriptional regulatory protein LJ_0904 from Lactobacillus johnsonii (strain CNCM I-12250 / La1 / NCC 533).